Consider the following 324-residue polypeptide: UDP-N-acetylenolpyruvoylglucosamine reductase (324 aa).

In terms of domain architecture, FAD-binding PCMH-type spans 38-217; it reads AGGLAELMFQ…IRAEMDAVRQ (180 aa). R183 is a catalytic residue. Catalysis depends on S232, which acts as the Proton donor. E302 is a catalytic residue.

Belongs to the MurB family. FAD is required as a cofactor.

It localises to the cytoplasm. It carries out the reaction UDP-N-acetyl-alpha-D-muramate + NADP(+) = UDP-N-acetyl-3-O-(1-carboxyvinyl)-alpha-D-glucosamine + NADPH + H(+). It functions in the pathway cell wall biogenesis; peptidoglycan biosynthesis. In terms of biological role, cell wall formation. This Allorhizobium ampelinum (strain ATCC BAA-846 / DSM 112012 / S4) (Agrobacterium vitis (strain S4)) protein is UDP-N-acetylenolpyruvoylglucosamine reductase.